The sequence spans 448 residues: Probable glycine dehydrogenase (decarboxylating) subunit 1 (448 aa).

The protein belongs to the GcvP family. N-terminal subunit subfamily. In terms of assembly, the glycine cleavage system is composed of four proteins: P, T, L and H. In this organism, the P 'protein' is a heterodimer of two subunits.

It catalyses the reaction N(6)-[(R)-lipoyl]-L-lysyl-[glycine-cleavage complex H protein] + glycine + H(+) = N(6)-[(R)-S(8)-aminomethyldihydrolipoyl]-L-lysyl-[glycine-cleavage complex H protein] + CO2. In terms of biological role, the glycine cleavage system catalyzes the degradation of glycine. The P protein binds the alpha-amino group of glycine through its pyridoxal phosphate cofactor; CO(2) is released and the remaining methylamine moiety is then transferred to the lipoamide cofactor of the H protein. The chain is Probable glycine dehydrogenase (decarboxylating) subunit 1 from Parvibaculum lavamentivorans (strain DS-1 / DSM 13023 / NCIMB 13966).